A 219-amino-acid polypeptide reads, in one-letter code: uncharacterized protein (219 aa).

Residues 1–26 (MNDRGVPNSRTGPSLLALLPAANSYA) form the signal peptide. Disordered regions lie at residues 36–57 (AVGV…TRGG) and 88–219 (SGLG…GLCE). Over residues 127 to 173 (LSPPSALGSSPAGRGRPAPAIAAAKSSPLSASAAPGRCGARPRAPSR) the composition is skewed to low complexity. A compositionally biased stretch (basic residues) spans 176–202 (RERRPRGNPRAPLRRGARGRRRSHTRG).

This is an uncharacterized protein from Gallid herpesvirus 2 (strain Chicken/Md5/ATCC VR-987) (GaHV-2).